A 408-amino-acid chain; its full sequence is SERPINE1 mRNA-binding protein 1 (408 aa).

S25 is modified (phosphoserine). 2 disordered regions span residues 33-292 and 328-408; these read AAEN…TLDE and SKSE…PALA. A compositionally biased stretch (low complexity) spans 51 to 68; that stretch reads AKSAAQAAAQTNSNAAGK. At K52 the chain carries N6-acetyllysine; alternate. A Glycyl lysine isopeptide (Lys-Gly) (interchain with G-Cter in SUMO1); alternate cross-link involves residue K52. Position 68 is an N6-acetyllysine (K68). 3 stretches are compositionally biased toward basic and acidic residues: residues 70 to 80, 89 to 114, and 122 to 162; these read LRKESQKDRKN, VDKK…RRPD, and KIID…DRPI. K102 is covalently cross-linked (Glycyl lysine isopeptide (Lys-Gly) (interchain with G-Cter in SUMO1); alternate). K102 is covalently cross-linked (Glycyl lysine isopeptide (Lys-Gly) (interchain with G-Cter in SUMO2); alternate). N6-acetyllysine is present on residues K122 and K140. Positions 164-182 are enriched in gly residues; that stretch reads GRGGLGRGRGGRGRGMGRG. R165 and R188 each carry omega-N-methylarginine. The span at 183-199 shows a compositional bias: basic and acidic residues; that stretch reads DGFDSRGKREFDRHSGS. S197 carries the phosphoserine modification. Phosphoserine; by MTOR is present on S199. 3 positions are modified to phosphoserine: S203, S205, and S208. An N6-acetyllysine; alternate modification is found at K211. K211 is covalently cross-linked (Glycyl lysine isopeptide (Lys-Gly) (interchain with G-Cter in SUMO2); alternate). Position 216 is an omega-N-methylarginine (R216). S221 bears the Phosphoserine mark. H222 is covalently cross-linked (Glycyl lysine isopeptide (Lys-Gly) (interchain with G-Cter in SUMO2)). T226 bears the Phosphothreonine; by MTOR mark. K228 is covalently cross-linked (Glycyl lysine isopeptide (Lys-Gly) (interchain with G-Cter in SUMO1); alternate). Residue K228 forms a Glycyl lysine isopeptide (Lys-Gly) (interchain with G-Cter in SUMO2); alternate linkage. Residue K228 forms a Glycyl lysine isopeptide (Lys-Gly) (interchain with G-Cter in SUMO2) linkage. Phosphoserine is present on residues L231, S234, and Y237. S234 is subject to Phosphothreonine. K240 carries the post-translational modification Phosphothreonine. The segment covering 240–253 has biased composition (polar residues); sequence KQISYNYSDLDQSN. Positions 261–275 are enriched in basic and acidic residues; it reads GEEHHPVADTENKEN. K281 participates in a covalent cross-link: Glycyl lysine isopeptide (Lys-Gly) (interchain with G-Cter in SUMO1); alternate. K281 is covalently cross-linked (Glycyl lysine isopeptide (Lys-Gly) (interchain with G-Cter in SUMO2); alternate). Basic and acidic residues-rich tracts occupy residues 282-292 and 328-342; these read EEGPKEMTLDE and SKSE…VMDH. Residue K329 is modified to N6-acetyllysine. S330 bears the Phosphoserine mark. The segment covering 363–372 has biased composition (gly residues); it reads GRPGRGGRGG. R364, R367, and R370 each carry omega-N-methylarginine. Residues S392 and S394 each carry the phosphoserine modification.

Belongs to the SERBP1-HABP4 family. In terms of assembly, associates with mature 80S ribosomes. Interacts with EEF2/eEF2; interaction sequesters EEF2/eEF2 at the A-site of the ribosome, thereby blocking the interaction sites of the mRNA-tRNA complex, promoting ribosome stabilization and hibernation. Interacts with SPIN1. Interacts with CHD3 and TDRD3. Interacts with ZDHHC17 (via ANK repeats). In terms of processing, phosphorylation by MTOR inhibits SERBP1 and relieves ribosome hibernation. Expressed at high level in the heart, skeletal muscle and kidney, and at low levels in placenta, liver and brain.

It is found in the cytoplasm. It localises to the nucleus. The protein resides in the perinuclear region. Its function is as follows. Ribosome-binding protein that promotes ribosome hibernation, a process during which ribosomes are stabilized in an inactive state and preserved from proteasomal degradation. Acts via its association with EEF2/eEF2 factor, sequestering EEF2/eEF2 at the A-site of the ribosome and promoting ribosome stabilization and storage in an inactive state. May also play a role in the regulation of mRNA stability: binds to the 3'-most 134 nt of the SERPINE1/PAI1 mRNA, a region which confers cyclic nucleotide regulation of message decay. Seems to play a role in PML-nuclear bodies formation. The sequence is that of SERPINE1 mRNA-binding protein 1 from Homo sapiens (Human).